A 619-amino-acid chain; its full sequence is 1-deoxy-D-xylulose-5-phosphate synthase (619 aa).

Thiamine diphosphate contacts are provided by residues His80 and 121 to 123; that span reads GHS. Asp152 is a binding site for Mg(2+). Thiamine diphosphate-binding positions include 153-154, Asn181, Tyr288, and Glu370; that span reads GA. Asn181 contributes to the Mg(2+) binding site.

Belongs to the transketolase family. DXPS subfamily. Homodimer. It depends on Mg(2+) as a cofactor. Thiamine diphosphate is required as a cofactor.

The enzyme catalyses D-glyceraldehyde 3-phosphate + pyruvate + H(+) = 1-deoxy-D-xylulose 5-phosphate + CO2. It participates in metabolic intermediate biosynthesis; 1-deoxy-D-xylulose 5-phosphate biosynthesis; 1-deoxy-D-xylulose 5-phosphate from D-glyceraldehyde 3-phosphate and pyruvate: step 1/1. Catalyzes the acyloin condensation reaction between C atoms 2 and 3 of pyruvate and glyceraldehyde 3-phosphate to yield 1-deoxy-D-xylulose-5-phosphate (DXP). The protein is 1-deoxy-D-xylulose-5-phosphate synthase of Yersinia pseudotuberculosis serotype O:3 (strain YPIII).